Here is a 603-residue protein sequence, read N- to C-terminus: Beta-glucuronidase (603 aa).

Residues Asp-163 and Asn-412 each contribute to the D-glucuronate site. Residue Glu-413 is the Proton donor of the active site. D-glucuronate-binding residues include Asn-466, Tyr-472, Glu-504, Trp-549, and Lys-568. The active-site Nucleophile is the Glu-504. Residues 566 to 568 carry the N-K motif motif; the sequence is NKK.

The protein belongs to the glycosyl hydrolase 2 family. In terms of assembly, homotetramer.

It carries out the reaction a beta-D-glucuronoside + H2O = D-glucuronate + an alcohol. It catalyses the reaction 4-methylumbelliferone beta-D-glucuronate + H2O = 4-methylumbelliferone + D-glucuronate. Its activity is regulated as follows. Potently inhibited by a set of synthetic compounds like thio-urea derivatives and analogs, and uronic isofagomine (UIFG) derivatives. Inhibitors of gut microbial beta-glucuronidases block the reactivation of glucuronidated cancer drugs, and thereby alleviate drug-induced GI toxicity. In terms of biological role, displays beta-glucuronidase activity with the artificial substrate p-nitrophenyl-beta-D-glucuronide (PNPG) and with 4-methylumbelliferyl-glucuronide. Is likely capable of scavenging glucuronate from a range of chemically distinct xenobiotic and endobiotic glucuronides present in the gastrointestinal (GI) tract, to be able to utilize these diverse sources of carbon. As part of the GI microbiome, this enzyme is able to reactivate glucuronide drug conjugates, such reactivated compounds can significantly damage the GI tract. The protein is Beta-glucuronidase (uidA) of Escherichia coli (strain K12).